Here is a 270-residue protein sequence, read N- to C-terminus: Glutamate racemase (270 aa).

Residues 13-14 (DS) and 45-46 (YG) contribute to the substrate site. Cys-77 (proton donor/acceptor) is an active-site residue. Residue 78–79 (NT) coordinates substrate. The Proton donor/acceptor role is filled by Cys-185. A substrate-binding site is contributed by 186–187 (TH).

This sequence belongs to the aspartate/glutamate racemases family.

It carries out the reaction L-glutamate = D-glutamate. It functions in the pathway cell wall biogenesis; peptidoglycan biosynthesis. In terms of biological role, provides the (R)-glutamate required for cell wall biosynthesis. This chain is Glutamate racemase, found in Vibrio parahaemolyticus serotype O3:K6 (strain RIMD 2210633).